Reading from the N-terminus, the 814-residue chain is Pre-rRNA-processing protein TSR1 homolog (814 aa).

The interval 1 to 67 (MADHAFHRPG…NQMNQLRKNK (67 aa)) is disordered. Basic residues predominate over residues 16 to 27 (NKAHKTGRHRSK). Residues 84–249 (APFLVCLLPM…MRRIGGQKKR (166 aa)) form the Bms1-type G domain. Disordered regions lie at residues 316–357 (PYKL…DAEQ) and 392–448 (WIPD…EEFQ). A compositionally biased stretch (basic and acidic residues) spans 317–340 (YKLDKSRDGENSEVRLLDRSDPSK). Positions 395 to 426 (DVEEVEDPDGKDDDDMSEDDDDDKEDDNEDFM) are enriched in acidic residues. A compositionally biased stretch (basic and acidic residues) spans 431 to 442 (KSFEDEYEKRDS). Phosphothreonine is present on Thr-444.

This sequence belongs to the TRAFAC class translation factor GTPase superfamily. Bms1-like GTPase family. TSR1 subfamily.

The protein localises to the nucleus. It localises to the nucleolus. Functionally, required during maturation of the 40S ribosomal subunit in the nucleolus. The sequence is that of Pre-rRNA-processing protein TSR1 homolog from Drosophila melanogaster (Fruit fly).